A 376-amino-acid polypeptide reads, in one-letter code: Chaperone protein DnaJ (376 aa).

Residues 5–70 (DYYEVLGVAR…NKRRMYDSHG (66 aa)) form the J domain. A CR-type zinc finger spans residues 132-209 (GVERRIEIPT…CHGNGRVEED (78 aa)). Residues C145, C148, C161, C164, C183, C186, C197, and C200 each coordinate Zn(2+). 4 CXXCXGXG motif repeats span residues 145–152 (CGDCDGSG), 161–168 (CNVCHGRG), 183–190 (CHNCGGRG), and 197–204 (CKTCHGNG). Residues 223–242 (GDRIRLSGEGEAGPAGTPPG) form a disordered region.

This sequence belongs to the DnaJ family. Homodimer. It depends on Zn(2+) as a cofactor.

It localises to the cytoplasm. Functionally, participates actively in the response to hyperosmotic and heat shock by preventing the aggregation of stress-denatured proteins and by disaggregating proteins, also in an autonomous, DnaK-independent fashion. Unfolded proteins bind initially to DnaJ; upon interaction with the DnaJ-bound protein, DnaK hydrolyzes its bound ATP, resulting in the formation of a stable complex. GrpE releases ADP from DnaK; ATP binding to DnaK triggers the release of the substrate protein, thus completing the reaction cycle. Several rounds of ATP-dependent interactions between DnaJ, DnaK and GrpE are required for fully efficient folding. Also involved, together with DnaK and GrpE, in the DNA replication of plasmids through activation of initiation proteins. The protein is Chaperone protein DnaJ of Stenotrophomonas maltophilia (strain R551-3).